The chain runs to 145 residues: Ribosome maturation factor RimP (145 aa).

It belongs to the RimP family.

The protein localises to the cytoplasm. In terms of biological role, required for maturation of 30S ribosomal subunits. The protein is Ribosome maturation factor RimP of Azotobacter vinelandii (strain DJ / ATCC BAA-1303).